A 415-amino-acid polypeptide reads, in one-letter code: Glucose-1-phosphate adenylyltransferase (415 aa).

Residues Y100, G165, 182–183 (EK), and S200 contribute to the alpha-D-glucose 1-phosphate site.

The protein belongs to the bacterial/plant glucose-1-phosphate adenylyltransferase family. In terms of assembly, homotetramer.

The catalysed reaction is alpha-D-glucose 1-phosphate + ATP + H(+) = ADP-alpha-D-glucose + diphosphate. It participates in glycan biosynthesis; glycogen biosynthesis. Its function is as follows. Involved in the biosynthesis of ADP-glucose, a building block required for the elongation reactions to produce glycogen. Catalyzes the reaction between ATP and alpha-D-glucose 1-phosphate (G1P) to produce pyrophosphate and ADP-Glc. The sequence is that of Glucose-1-phosphate adenylyltransferase from Bifidobacterium animalis subsp. lactis (strain AD011).